A 203-amino-acid chain; its full sequence is V-type ATP synthase subunit D (203 aa).

This sequence belongs to the V-ATPase D subunit family.

Functionally, produces ATP from ADP in the presence of a proton gradient across the membrane. This Chlamydia muridarum (strain MoPn / Nigg) protein is V-type ATP synthase subunit D (atpD).